Reading from the N-terminus, the 185-residue chain is ATP synthase subunit b 2 (185 aa).

A disordered region spans residues 1–23 (MAEGHGDAKGATAHTAADGGHKA). Over residues 9–18 (KGATAHTAAD) the composition is skewed to low complexity. A helical membrane pass occupies residues 37 to 57 (LVSLTIAFVALYLIVSKIILP).

It belongs to the ATPase B chain family. As to quaternary structure, F-type ATPases have 2 components, F(1) - the catalytic core - and F(0) - the membrane proton channel. F(1) has five subunits: alpha(3), beta(3), gamma(1), delta(1), epsilon(1). F(0) has three main subunits: a(1), b(2) and c(10-14). The alpha and beta chains form an alternating ring which encloses part of the gamma chain. F(1) is attached to F(0) by a central stalk formed by the gamma and epsilon chains, while a peripheral stalk is formed by the delta and b chains.

It localises to the cell inner membrane. F(1)F(0) ATP synthase produces ATP from ADP in the presence of a proton or sodium gradient. F-type ATPases consist of two structural domains, F(1) containing the extramembraneous catalytic core and F(0) containing the membrane proton channel, linked together by a central stalk and a peripheral stalk. During catalysis, ATP synthesis in the catalytic domain of F(1) is coupled via a rotary mechanism of the central stalk subunits to proton translocation. Its function is as follows. Component of the F(0) channel, it forms part of the peripheral stalk, linking F(1) to F(0). The b'-subunit is a diverged and duplicated form of b found in plants and photosynthetic bacteria. This is ATP synthase subunit b 2 (atpF2) from Rhodopseudomonas palustris (strain BisB5).